The following is a 572-amino-acid chain: Proline--tRNA ligase (572 aa).

This sequence belongs to the class-II aminoacyl-tRNA synthetase family. ProS type 1 subfamily. Homodimer.

The protein localises to the cytoplasm. It carries out the reaction tRNA(Pro) + L-proline + ATP = L-prolyl-tRNA(Pro) + AMP + diphosphate. Functionally, catalyzes the attachment of proline to tRNA(Pro) in a two-step reaction: proline is first activated by ATP to form Pro-AMP and then transferred to the acceptor end of tRNA(Pro). As ProRS can inadvertently accommodate and process non-cognate amino acids such as alanine and cysteine, to avoid such errors it has two additional distinct editing activities against alanine. One activity is designated as 'pretransfer' editing and involves the tRNA(Pro)-independent hydrolysis of activated Ala-AMP. The other activity is designated 'posttransfer' editing and involves deacylation of mischarged Ala-tRNA(Pro). The misacylated Cys-tRNA(Pro) is not edited by ProRS. This chain is Proline--tRNA ligase, found in Salmonella schwarzengrund (strain CVM19633).